The sequence spans 118 residues: Transcriptional regulator WhiB4 (118 aa).

The 4Fe-4S Wbl-type domain maps to 36 to 92 (LCRTTDPDELFVRGAAQRKAAVICRHCPVMQECAADALDNKVEFGVWGGMTERQRRA). 4 residues coordinate [4Fe-4S] cluster: Cys37, Cys59, Cys62, and Cys68. Intrachain disulfides connect Cys37–Cys68 and Cys59–Cys62.

This sequence belongs to the WhiB family. [4Fe-4S] cluster serves as cofactor. The Fe-S cluster can be nitrosylated by nitric oxide (NO). Post-translationally, upon Fe-S cluster removal intramolecular disulfide bonds are formed.

It localises to the cytoplasm. Its function is as follows. Acts as a transcriptional regulator. Probably redox-responsive. The apo- but not holo-form probably binds DNA. In Mycobacterium tuberculosis (strain CDC 1551 / Oshkosh), this protein is Transcriptional regulator WhiB4 (whiB4).